We begin with the raw amino-acid sequence, 237 residues long: 1-(5-phosphoribosyl)-5-[(5-phosphoribosylamino)methylideneamino] imidazole-4-carboxamide isomerase (237 aa).

Residue aspartate 8 is the Proton acceptor of the active site. The active-site Proton donor is aspartate 129.

It belongs to the HisA/HisF family.

The protein localises to the cytoplasm. It carries out the reaction 1-(5-phospho-beta-D-ribosyl)-5-[(5-phospho-beta-D-ribosylamino)methylideneamino]imidazole-4-carboxamide = 5-[(5-phospho-1-deoxy-D-ribulos-1-ylimino)methylamino]-1-(5-phospho-beta-D-ribosyl)imidazole-4-carboxamide. It functions in the pathway amino-acid biosynthesis; L-histidine biosynthesis; L-histidine from 5-phospho-alpha-D-ribose 1-diphosphate: step 4/9. The protein is 1-(5-phosphoribosyl)-5-[(5-phosphoribosylamino)methylideneamino] imidazole-4-carboxamide isomerase of Roseiflexus sp. (strain RS-1).